The primary structure comprises 292 residues: Undecaprenyl-diphosphatase (292 aa).

7 helical membrane-spanning segments follow: residues M1–V21, F46–I66, A88–L108, A114–A134, F192–P212, V225–W245, and V253–V273.

Belongs to the UppP family.

The protein localises to the cell inner membrane. The catalysed reaction is di-trans,octa-cis-undecaprenyl diphosphate + H2O = di-trans,octa-cis-undecaprenyl phosphate + phosphate + H(+). In terms of biological role, catalyzes the dephosphorylation of undecaprenyl diphosphate (UPP). Confers resistance to bacitracin. This Anaeromyxobacter dehalogenans (strain 2CP-C) protein is Undecaprenyl-diphosphatase.